Consider the following 286-residue polypeptide: Protein WVD2-like 1 (286 aa).

The disordered stretch occupies residues 31 to 101; that stretch reads ETDEEFEVKE…ENKKHIDDED (71 aa). Thr-32 carries the phosphothreonine modification. The segment covering 38 to 47 has biased composition (basic and acidic residues); it reads VKECTEEKSL. Positions 131-182 form a coiled coil; that stretch reads AQRAEKRKEYYQKLEEKNQALEAERNELEQRQKDEQEAALKQLRKNLKFKAK. Positions 186 to 286 are disordered; the sequence is NFYYEAPPAK…KPVNESSEEA (101 aa). Polar residues predominate over residues 234 to 247; the sequence is TVSNRNRHSTGTVQ.

This sequence belongs to the TPX2 family.

The protein resides in the cytoplasm. The protein localises to the cytoskeleton. Functionally, microtubule-associated protein (MAP) that regulates the orientation of interphase cortical microtubules. Modulates both rotational polarity and anisotropic cell expansion during organ growth. Promotes clockwise root and etiolated hypocotyls coiling, clockwise leaf curling, but left-handed petiole twisting. The sequence is that of Protein WVD2-like 1 (WDL1) from Arabidopsis thaliana (Mouse-ear cress).